The following is a 145-amino-acid chain: Large ribosomal subunit protein uL15 (145 aa).

Residues Met1 to Glu50 are disordered. A compositionally biased stretch (gly residues) spans Arg20 to Ser30.

The protein belongs to the universal ribosomal protein uL15 family. As to quaternary structure, part of the 50S ribosomal subunit.

In terms of biological role, binds to the 23S rRNA. This chain is Large ribosomal subunit protein uL15, found in Aster yellows witches'-broom phytoplasma (strain AYWB).